The sequence spans 773 residues: Glucan endo-1,3-beta-D-glucosidase (773 aa).

Positions 1–194 (MPPGAKVPQA…KNYFSIAVLP (194 aa)) are beta-sandwich subdomain. In terms of domain architecture, GH81 spans 1–647 (MPPGAKVPQA…HWICNLDSLG (647 aa)). Mg(2+)-binding residues include isoleucine 31, asparagine 34, glutamine 35, tyrosine 36, and alanine 89. The alpha/beta subdomain stretch occupies residues 195-288 (DNTVSTLTYY…QGTSFKTVYR (94 aa)). The (alpha/beta)6 barrel subdomain stretch occupies residues 298-647 (DKGTYDREAL…HWICNLDSLG (350 aa)). (1,3-beta-D-glucosyl)n-binding residues include tyrosine 327 and lysine 331. Ca(2+) is bound by residues aspartate 365, threonine 368, glutamate 373, and lysine 376. (1,3-beta-D-glucosyl)n is bound by residues aspartate 402 and histidine 406. The active site involves aspartate 402. The Ca(2+) site is built by leucine 454, arginine 455, and phenylalanine 457. Asparagine 477, glutamate 479, and glutamate 483 together coordinate (1,3-beta-D-glucosyl)n. Residues glutamate 479 and glutamate 483 contribute to the active site. Residues lysine 527, lysine 618, asparagine 619, and tryptophan 621 each contribute to the Mg(2+) site. The Ca(2+) site is built by aspartate 712, asparagine 714, aspartate 716, glycine 717, lysine 718, aspartate 723, aspartate 748, isoleucine 749, asparagine 750, aspartate 752, lysine 754, and aspartate 759.

Belongs to the glycosyl hydrolase 81 family. Ca(2+) is required as a cofactor. It depends on Mg(2+) as a cofactor.

Its subcellular location is the secreted. It catalyses the reaction Hydrolysis of (1-&gt;3)-beta-D-glucosidic linkages in (1-&gt;3)-beta-D-glucans.. Its activity is regulated as follows. Inhibited by manganese, zinc, and copper ions. In terms of biological role, cleaves internal linkages in 1,3-beta-glucan. May contribute to plant biomass degradation. This chain is Glucan endo-1,3-beta-D-glucosidase, found in Acetivibrio thermocellus (strain ATCC 27405 / DSM 1237 / JCM 9322 / NBRC 103400 / NCIMB 10682 / NRRL B-4536 / VPI 7372) (Clostridium thermocellum).